A 213-amino-acid polypeptide reads, in one-letter code: MGYFITFEGIEGCGKTTQIKRAAQSLREAGHRVVVTREPGGCPIADDIRAILLDAGNSAMVPTTELLLYAAARAQHVAEVIAPALAEGAVVLCDRFTDSTLVYQGFGRNLDRDLIARLNTLAAGQIRPDLTILLDCPVAVGLARAAARINSRQTNREERFERESLLFHERVREGFLSLAGGEPHRFAVIDGNDGVEATATAVADVLLNRVPRR.

Position 9-16 (9-16 (GIEGCGKT)) interacts with ATP.

This sequence belongs to the thymidylate kinase family.

The enzyme catalyses dTMP + ATP = dTDP + ADP. In terms of biological role, phosphorylation of dTMP to form dTDP in both de novo and salvage pathways of dTTP synthesis. The chain is Thymidylate kinase from Geobacter sulfurreducens (strain ATCC 51573 / DSM 12127 / PCA).